A 51-amino-acid polypeptide reads, in one-letter code: uncharacterized protein (51 aa).

Positions glutamate 3 to leucine 30 form a coiled coil.

This is an uncharacterized protein from Bacillus subtilis (strain 168).